Reading from the N-terminus, the 249-residue chain is 3-deoxy-manno-octulosonate cytidylyltransferase (249 aa).

This sequence belongs to the KdsB family.

Its subcellular location is the cytoplasm. The enzyme catalyses 3-deoxy-alpha-D-manno-oct-2-ulosonate + CTP = CMP-3-deoxy-beta-D-manno-octulosonate + diphosphate. The protein operates within nucleotide-sugar biosynthesis; CMP-3-deoxy-D-manno-octulosonate biosynthesis; CMP-3-deoxy-D-manno-octulosonate from 3-deoxy-D-manno-octulosonate and CTP: step 1/1. It functions in the pathway bacterial outer membrane biogenesis; lipopolysaccharide biosynthesis. Its function is as follows. Activates KDO (a required 8-carbon sugar) for incorporation into bacterial lipopolysaccharide in Gram-negative bacteria. The sequence is that of 3-deoxy-manno-octulosonate cytidylyltransferase from Serratia proteamaculans (strain 568).